Reading from the N-terminus, the 239-residue chain is tRNA (guanine-N(7)-)-methyltransferase (239 aa).

Glutamate 68, glutamate 93, aspartate 120, and aspartate 143 together coordinate S-adenosyl-L-methionine. Aspartate 143 is a catalytic residue. Substrate-binding positions include lysine 147, aspartate 180, and 217–220 (TKFE).

Belongs to the class I-like SAM-binding methyltransferase superfamily. TrmB family.

The catalysed reaction is guanosine(46) in tRNA + S-adenosyl-L-methionine = N(7)-methylguanosine(46) in tRNA + S-adenosyl-L-homocysteine. Its pathway is tRNA modification; N(7)-methylguanine-tRNA biosynthesis. Its function is as follows. Catalyzes the formation of N(7)-methylguanine at position 46 (m7G46) in tRNA. The polypeptide is tRNA (guanine-N(7)-)-methyltransferase (Vibrio vulnificus (strain CMCP6)).